A 195-amino-acid polypeptide reads, in one-letter code: Imidazoleglycerol-phosphate dehydratase (195 aa).

Belongs to the imidazoleglycerol-phosphate dehydratase family.

The protein resides in the cytoplasm. The enzyme catalyses D-erythro-1-(imidazol-4-yl)glycerol 3-phosphate = 3-(imidazol-4-yl)-2-oxopropyl phosphate + H2O. Its pathway is amino-acid biosynthesis; L-histidine biosynthesis; L-histidine from 5-phospho-alpha-D-ribose 1-diphosphate: step 6/9. The polypeptide is Imidazoleglycerol-phosphate dehydratase (Polynucleobacter asymbioticus (strain DSM 18221 / CIP 109841 / QLW-P1DMWA-1) (Polynucleobacter necessarius subsp. asymbioticus)).